A 327-amino-acid polypeptide reads, in one-letter code: Interleukin-12 subunit beta (327 aa).

A signal peptide spans Met1 to Ala22. Residues Ile23 to Lys106 enclose the Ig-like C2-type domain. A disulfide bridge connects residues Cys50 and Cys90. An N-linked (GlcNAc...) asparagine glycan is attached at Asn223. One can recognise a Fibronectin type-III domain in the interval Pro238–Ser327.

It belongs to the IL-12B family. As to quaternary structure, heterodimer with IL12A; disulfide-linked. The heterodimer is known as interleukin IL-12. Heterodimer with IL23A; disulfide-linked. The heterodimer is known as interleukin IL-23. Also secreted as a monomer. Interacts with NBR1; this interaction promotes IL-12 secretion.

It localises to the secreted. Functionally, cytokine that can act as a growth factor for activated T and NK cells, enhance the lytic activity of NK/lymphokine-activated killer cells, and stimulate the production of IFN-gamma by resting PBMC. Associates with IL23A to form the IL-23 interleukin, a heterodimeric cytokine which functions in innate and adaptive immunity. IL-23 may constitute with IL-17 an acute response to infection in peripheral tissues. IL-23 binds to a heterodimeric receptor complex composed of IL12RB1 and IL23R, activates the Jak-Stat signaling cascade, stimulates memory rather than naive T-cells and promotes production of pro-inflammatory cytokines. IL-23 induces autoimmune inflammation and thus may be responsible for autoimmune inflammatory diseases and may be important for tumorigenesis. This Capra hircus (Goat) protein is Interleukin-12 subunit beta (IL12B).